The chain runs to 669 residues: Collagen alpha-1(II) chain (669 aa).

4-hydroxyproline occurs at positions 3 and 12. A compositionally biased stretch (low complexity) spans 318 to 327 (XXXXXXXGAP). 3 disordered regions span residues 318–360 (XXXX…XXXX), 405–438 (XXXXXXVGPPGANGNPGPAGPPGPAGKXXXXXXX), and 638–669 (XXGFTGLQGLPGPPGTSGDQGASGPSGPAGPR). 4-hydroxyproline is present on residues P336 and P345. 2 stretches are compositionally biased toward low complexity: residues 339-360 (AGFAGPPGADGQPGAKXXXXXX) and 405-420 (XXXXXXVGPPGANGNP). A 3-hydroxyproline modification is found at P413. 4-hydroxyproline is present on residues P414, P420, and P426. Composition is skewed to low complexity over residues 429-438 (AGKXXXXXXX) and 638-647 (XXGFTGLQGL). P648 is subject to 4-hydroxyproline. P650 is modified (3-hydroxyproline).

The protein belongs to the fibrillar collagen family. In terms of assembly, homotrimers of alpha 1(II) chains. In terms of processing, contains mostly 4-hydroxyproline. Prolines at the third position of the tripeptide repeating unit (G-X-P) are 4-hydroxylated in some or all of the chains. Post-translationally, contains 3-hydroxyproline at a few sites. This modification occurs on the first proline residue in the sequence motif Gly-Pro-Hyp, where Hyp is 4-hydroxyproline.

It is found in the secreted. It localises to the extracellular space. The protein localises to the extracellular matrix. Type II collagen is specific for cartilaginous tissues. It is essential for the normal embryonic development of the skeleton, for linear growth and for the ability of cartilage to resist compressive forces. The sequence is that of Collagen alpha-1(II) chain from Mammut americanum (American mastodon).